Reading from the N-terminus, the 488-residue chain is L-arabinose isomerase 1 (488 aa).

Mn(2+) is bound by residues glutamate 306, glutamate 331, histidine 348, and histidine 447.

Belongs to the arabinose isomerase family. The cofactor is Mn(2+).

It carries out the reaction beta-L-arabinopyranose = L-ribulose. The protein operates within carbohydrate degradation; L-arabinose degradation via L-ribulose; D-xylulose 5-phosphate from L-arabinose (bacterial route): step 1/3. Catalyzes the conversion of L-arabinose to L-ribulose. In Clostridium acetobutylicum (strain ATCC 824 / DSM 792 / JCM 1419 / IAM 19013 / LMG 5710 / NBRC 13948 / NRRL B-527 / VKM B-1787 / 2291 / W), this protein is L-arabinose isomerase 1.